The sequence spans 673 residues: Armadillo repeat-containing protein 8 (673 aa).

The residue at position 2 (Ala2) is an N-acetylalanine. 14 ARM repeats span residues Asn51–Met92, Glu95–Thr134, Thr138–Lys176, Pro178–Phe217, Met224–Arg265, Ile269–Glu309, Glu313–Lys352, Asp374–Arg413, Gln416–Leu455, Ser458–Phe497, Gln501–Ser540, Pro543–Asp585, Thr588–Trp627, and Gln634–Ala673. Residue Ser337 is modified to Phosphoserine. Phosphoserine is present on Ser512.

In terms of assembly, identified in the CTLH complex that contains GID4, RANBP9 and/or RANBP10, MKLN1, MAEA, RMND5A (or alternatively its paralog RMND5B), GID8, ARMC8, WDR26 and YPEL5. Within this complex, MAEA, RMND5A (or alternatively its paralog RMND5B), GID8, WDR26, and RANBP9 and/or RANBP10 form the catalytic core, while GID4, MKLN1, ARMC8 and YPEL5 have ancillary roles.

It localises to the nucleus. The protein localises to the cytoplasm. Its function is as follows. Component of the CTLH E3 ubiquitin-protein ligase complex that selectively accepts ubiquitin from UBE2H and mediates ubiquitination and subsequent proteasomal degradation of the transcription factor HBP1. This Homo sapiens (Human) protein is Armadillo repeat-containing protein 8 (ARMC8).